The sequence spans 361 residues: Phospho-N-acetylmuramoyl-pentapeptide-transferase (361 aa).

Helical transmembrane passes span 27–47 (GALF…ISLL), 72–92 (TPTM…FLWA), 99–119 (VWIT…DDYL), 139–159 (ALIA…GLAY), 169–189 (AIVN…VGAG), 200–220 (GLAI…AYLV), 240–260 (LAVV…FNAP), 264–284 (IFMG…VAVA), 289–309 (IVLA…IIQV), and 338–358 (QVVI…LATL).

The protein belongs to the glycosyltransferase 4 family. MraY subfamily. Mg(2+) serves as cofactor.

It is found in the cell inner membrane. The enzyme catalyses UDP-N-acetyl-alpha-D-muramoyl-L-alanyl-gamma-D-glutamyl-meso-2,6-diaminopimeloyl-D-alanyl-D-alanine + di-trans,octa-cis-undecaprenyl phosphate = di-trans,octa-cis-undecaprenyl diphospho-N-acetyl-alpha-D-muramoyl-L-alanyl-D-glutamyl-meso-2,6-diaminopimeloyl-D-alanyl-D-alanine + UMP. Its pathway is cell wall biogenesis; peptidoglycan biosynthesis. Its function is as follows. Catalyzes the initial step of the lipid cycle reactions in the biosynthesis of the cell wall peptidoglycan: transfers peptidoglycan precursor phospho-MurNAc-pentapeptide from UDP-MurNAc-pentapeptide onto the lipid carrier undecaprenyl phosphate, yielding undecaprenyl-pyrophosphoryl-MurNAc-pentapeptide, known as lipid I. The protein is Phospho-N-acetylmuramoyl-pentapeptide-transferase of Methylobacterium sp. (strain 4-46).